Here is a 482-residue protein sequence, read N- to C-terminus: tRNA sulfurtransferase (482 aa).

A THUMP domain is found at 61–165 (PVIADALTRI…NDKLMLVKAR (105 aa)). Residues 183-184 (LI), lysine 265, glycine 287, and glutamine 296 contribute to the ATP site. The cysteines at positions 344 and 456 are disulfide-linked. The Rhodanese domain occupies 404 to 482 (FDADQVILDI…GFTNVKVYRP (79 aa)). Cysteine 456 functions as the Cysteine persulfide intermediate in the catalytic mechanism.

It belongs to the ThiI family.

It is found in the cytoplasm. The catalysed reaction is [ThiI sulfur-carrier protein]-S-sulfanyl-L-cysteine + a uridine in tRNA + 2 reduced [2Fe-2S]-[ferredoxin] + ATP + H(+) = [ThiI sulfur-carrier protein]-L-cysteine + a 4-thiouridine in tRNA + 2 oxidized [2Fe-2S]-[ferredoxin] + AMP + diphosphate. It carries out the reaction [ThiS sulfur-carrier protein]-C-terminal Gly-Gly-AMP + S-sulfanyl-L-cysteinyl-[cysteine desulfurase] + AH2 = [ThiS sulfur-carrier protein]-C-terminal-Gly-aminoethanethioate + L-cysteinyl-[cysteine desulfurase] + A + AMP + 2 H(+). It functions in the pathway cofactor biosynthesis; thiamine diphosphate biosynthesis. Functionally, catalyzes the ATP-dependent transfer of a sulfur to tRNA to produce 4-thiouridine in position 8 of tRNAs, which functions as a near-UV photosensor. Also catalyzes the transfer of sulfur to the sulfur carrier protein ThiS, forming ThiS-thiocarboxylate. This is a step in the synthesis of thiazole, in the thiamine biosynthesis pathway. The sulfur is donated as persulfide by IscS. In Serratia proteamaculans (strain 568), this protein is tRNA sulfurtransferase.